The sequence spans 618 residues: UvrABC system protein C (618 aa).

The region spanning Thr-20–Val-98 is the GIY-YIG domain. The UVR domain occupies Asp-207–Met-242.

This sequence belongs to the UvrC family. In terms of assembly, interacts with UvrB in an incision complex.

The protein resides in the cytoplasm. Its function is as follows. The UvrABC repair system catalyzes the recognition and processing of DNA lesions. UvrC both incises the 5' and 3' sides of the lesion. The N-terminal half is responsible for the 3' incision and the C-terminal half is responsible for the 5' incision. The sequence is that of UvrABC system protein C from Xanthomonas campestris pv. campestris (strain 8004).